The chain runs to 236 residues: Large ribosomal subunit protein uL1 (236 aa).

Belongs to the universal ribosomal protein uL1 family. In terms of assembly, part of the 50S ribosomal subunit.

In terms of biological role, binds directly to 23S rRNA. The L1 stalk is quite mobile in the ribosome, and is involved in E site tRNA release. Functionally, protein L1 is also a translational repressor protein, it controls the translation of the L11 operon by binding to its mRNA. This chain is Large ribosomal subunit protein uL1, found in Heliobacterium modesticaldum (strain ATCC 51547 / Ice1).